The primary structure comprises 339 residues: 2-halobenzoate 1,2-dioxygenase electron transfer component (339 aa).

The 2Fe-2S ferredoxin-type domain occupies H3–S96. [2Fe-2S] cluster-binding residues include C40, C45, C48, and C80. A ferredoxin-reductase region spans residues A98–T336. In terms of domain architecture, FAD-binding FR-type spans K103–R203.

This sequence belongs to the bacterial ring-hydroxylating dioxygenase ferredoxin reductase family. As to quaternary structure, monomer. It is part of 2-halobenzoate dioxygenase two component enzyme system. The other component is a dioxygenase component consisting of 3 large (CbdA) subunits and 3 small (CbdB) subunits. FAD serves as cofactor. [2Fe-2S] cluster is required as a cofactor.

It catalyses the reaction 2 reduced [2Fe-2S]-[ferredoxin] + NAD(+) + H(+) = 2 oxidized [2Fe-2S]-[ferredoxin] + NADH. It participates in xenobiotic degradation; benzoate degradation via CoA ligation. In terms of biological role, electron transfer component of 2-halobenzoate 1,2-dioxygenase system. In Burkholderia cepacia (Pseudomonas cepacia), this protein is 2-halobenzoate 1,2-dioxygenase electron transfer component (cbdC).